The sequence spans 218 residues: Cytochrome c biogenesis ATP-binding export protein CcmA (218 aa).

Residues 2 to 217 (LEAKNLTCIR…KSCLSACCAV (216 aa)) enclose the ABC transporter domain. 34–41 (GPNGAGKT) serves as a coordination point for ATP.

It belongs to the ABC transporter superfamily. CcmA exporter (TC 3.A.1.107) family. In terms of assembly, the complex is composed of two ATP-binding proteins (CcmA) and two transmembrane proteins (CcmB).

It is found in the cell inner membrane. It carries out the reaction heme b(in) + ATP + H2O = heme b(out) + ADP + phosphate + H(+). Part of the ABC transporter complex CcmAB involved in the biogenesis of c-type cytochromes; once thought to export heme, this seems not to be the case, but its exact role is uncertain. Responsible for energy coupling to the transport system. The polypeptide is Cytochrome c biogenesis ATP-binding export protein CcmA (Yersinia pestis).